Consider the following 544-residue polypeptide: CTP synthase (544 aa).

An amidoligase domain region spans residues 1 to 267 (MSKFVFVTGG…GDLLVSRLHL (267 aa)). Ser-13 serves as a coordination point for CTP. UTP is bound at residue Ser-13. 14–19 (SVGKGI) contributes to the ATP binding site. Tyr-54 is an L-glutamine binding site. Position 71 (Asp-71) interacts with ATP. Mg(2+)-binding residues include Asp-71 and Glu-141. CTP contacts are provided by residues 148–150 (DIE), 188–193 (KTKPTQ), and Lys-224. UTP contacts are provided by residues 188–193 (KTKPTQ) and Lys-224. The Glutamine amidotransferase type-1 domain maps to 299 to 534 (YVELKDAYYS…INAAKKVIRD (236 aa)). An L-glutamine-binding site is contributed by Gly-354. The Nucleophile; for glutamine hydrolysis role is filled by Cys-381. Residues 382–385 (LGMQ), Glu-405, and Arg-462 contribute to the L-glutamine site. Catalysis depends on residues His-507 and Glu-509.

Belongs to the CTP synthase family. In terms of assembly, homotetramer.

The enzyme catalyses UTP + L-glutamine + ATP + H2O = CTP + L-glutamate + ADP + phosphate + 2 H(+). It carries out the reaction L-glutamine + H2O = L-glutamate + NH4(+). It catalyses the reaction UTP + NH4(+) + ATP = CTP + ADP + phosphate + 2 H(+). Its pathway is pyrimidine metabolism; CTP biosynthesis via de novo pathway; CTP from UDP: step 2/2. Allosterically activated by GTP, when glutamine is the substrate; GTP has no effect on the reaction when ammonia is the substrate. The allosteric effector GTP functions by stabilizing the protein conformation that binds the tetrahedral intermediate(s) formed during glutamine hydrolysis. Inhibited by the product CTP, via allosteric rather than competitive inhibition. In terms of biological role, catalyzes the ATP-dependent amination of UTP to CTP with either L-glutamine or ammonia as the source of nitrogen. Regulates intracellular CTP levels through interactions with the four ribonucleotide triphosphates. The sequence is that of CTP synthase from Dehalococcoides mccartyi (strain ATCC BAA-2266 / KCTC 15142 / 195) (Dehalococcoides ethenogenes (strain 195)).